Here is a 142-residue protein sequence, read N- to C-terminus: Domesticated amidase effector 2 (142 aa).

The N-terminal stretch at 1–35 is a signal peptide; sequence MKLFLISAALVVLGLAAVADAIGCSDPSPFQGRWV. Residues Cys-43 and His-94 contribute to the active site.

It belongs to the cell wall amidase Dae2/Tae2-like family. Post-translationally, may be post-translationally modified, since the saliva wild-type protein is slightly heavier than the recombinant one. As to expression, detected in salivary glands and in the gut (at protein level).

The protein localises to the secreted. Tick gut and saliva antibacterial peptide that directly antagonizes host skin commensals which enter the ticks during feeding. Acts as a cell wall hydrolase that cleaves the bond between gamma-D-glutamate-meso-diaminopimelate of a peptide stem and D-alanine of another peptide stem in peptidoglycans. In vitro, degrades peptidoglycans from both Gram-negative and Gram-positive bacteria. Is not able to traverse the protective outer membrane of Gram-negative bacteria. Is not able to kill Borrelia burgdorferi, one of the Lyme disease-causing bacteria. In Ixodes scapularis (Black-legged tick), this protein is Domesticated amidase effector 2.